Consider the following 454-residue polypeptide: Probable multidrug resistance protein NorM (454 aa).

12 helical membrane passes run 13 to 32 (QFVL…FAMS), 47 to 69 (LAGV…GILM), 90 to 112 (VVIQ…GFFA), 132 to 154 (QFLS…RGFI), 166 to 188 (ITLL…HFGF), 193 to 215 (GVGA…VMII), 244 to 266 (LGVP…TLMM), 286 to 308 (LLYM…EVGA), 317 to 339 (YGFI…LYFF), 359 to 381 (EFLI…QGAL), 388 to 410 (NVSL…YILA), and 420 to 442 (YWIG…LFQV).

This sequence belongs to the multi antimicrobial extrusion (MATE) (TC 2.A.66.1) family.

It localises to the cell membrane. Functionally, multidrug efflux pump. In Bacillus cereus (strain ATCC 10987 / NRS 248), this protein is Probable multidrug resistance protein NorM (norM).